A 251-amino-acid chain; its full sequence is HTH-type transcriptional regulator UlaR (251 aa).

The 56-residue stretch at E3–A58 folds into the HTH deoR-type domain. The H-T-H motif DNA-binding region spans V20–D39.

The protein localises to the cytoplasm. Represses ulaG and the ulaABCDEF operon. This is HTH-type transcriptional regulator UlaR from Shigella flexneri.